Here is a 392-residue protein sequence, read N- to C-terminus: Tryptophan synthase beta chain (392 aa).

Residue K86 is modified to N6-(pyridoxal phosphate)lysine.

This sequence belongs to the TrpB family. As to quaternary structure, tetramer of two alpha and two beta chains. Requires pyridoxal 5'-phosphate as cofactor.

The catalysed reaction is (1S,2R)-1-C-(indol-3-yl)glycerol 3-phosphate + L-serine = D-glyceraldehyde 3-phosphate + L-tryptophan + H2O. It participates in amino-acid biosynthesis; L-tryptophan biosynthesis; L-tryptophan from chorismate: step 5/5. The beta subunit is responsible for the synthesis of L-tryptophan from indole and L-serine. The sequence is that of Tryptophan synthase beta chain (trpB) from Buchnera aphidicola subsp. Schlechtendalia chinensis.